A 158-amino-acid polypeptide reads, in one-letter code: Egg cell-secreted protein 1.1 (158 aa).

An N-terminal signal peptide occupies residues 1-27 (MASKSSFMATFNIVTLMLMVASSTVTA). The N-linked (GlcNAc...) asparagine glycan is linked to N122.

Belongs to the plant egg cell-secreted peptide family. Restricted to female reproductive tissues, specifically accumulating in storage vesicles of the unfertilized egg cell.

Its subcellular location is the cytoplasmic vesicle. The protein resides in the secreted. Its function is as follows. Involved in the regulation of gamete interactions during the double fertilization and to prevent multiple-pollen tube attraction; mediates the redistribution of the gamete fusogen HAP2/GCS1 to the cell surface after secretion upon sperm arrival. This is Egg cell-secreted protein 1.1 (EC1.1) from Arabidopsis thaliana (Mouse-ear cress).